Consider the following 370-residue polypeptide: Cytochrome b (370 aa).

4 consecutive transmembrane segments (helical) span residues 25–45 (FGSM…FLAV), 69–90 (WLMQ…YIHI), 105–125 (WLSG…GYVL), and 170–190 (FFAL…LHIM). The heme b site is built by His75 and His89. 2 residues coordinate heme b: His174 and His188. His193 is a binding site for a ubiquinone. The next 4 helical transmembrane spans lie at 218-238 (YKDL…VSFF), 280-300 (LGGA…PFTH), 312-332 (FMQL…WTAT), and 339-358 (FTTI…ISNP).

Belongs to the cytochrome b family. As to quaternary structure, the cytochrome bc1 complex contains 3 respiratory subunits (MT-CYB, CYC1 and UQCRFS1), 2 core proteins (UQCRC1 and UQCRC2) and probably 6 low-molecular weight proteins. Heme b is required as a cofactor.

The protein resides in the mitochondrion inner membrane. Functionally, component of the ubiquinol-cytochrome c reductase complex (complex III or cytochrome b-c1 complex) that is part of the mitochondrial respiratory chain. The b-c1 complex mediates electron transfer from ubiquinol to cytochrome c. Contributes to the generation of a proton gradient across the mitochondrial membrane that is then used for ATP synthesis. The sequence is that of Cytochrome b (MT-CYB) from Chilabothrus fordii (Ford's boa).